A 436-amino-acid chain; its full sequence is Phosphate-repressible acid phosphatase (436 aa).

The first 20 residues, 1-20, serve as a signal peptide directing secretion; sequence MKGTAASALLIALSATAAQA. N-linked (GlcNAc...) asparagine glycans are attached at residues asparagine 227, asparagine 283, and asparagine 304.

As to quaternary structure, monomer.

The catalysed reaction is a phosphate monoester + H2O = an alcohol + phosphate. The polypeptide is Phosphate-repressible acid phosphatase (pacA) (Aspergillus niger).